Consider the following 300-residue polypeptide: N-carbamoylputrescine amidase (300 aa).

The CN hydrolase domain maps to 8 to 266 (VTVAALQFAC…EAVLVAQFDL (259 aa)). The Proton acceptor role is filled by Glu-47. Residue Lys-120 is the Proton donor of the active site. The active-site Nucleophile is Cys-157.

Belongs to the carbon-nitrogen hydrolase superfamily. As to quaternary structure, homooctamer.

The enzyme catalyses N-carbamoylputrescine + H2O + 2 H(+) = putrescine + NH4(+) + CO2. The protein operates within amine and polyamine biosynthesis; putrescine biosynthesis via agmatine pathway; putrescine from N-carbamoylputrescine (amidase route): step 1/1. In terms of biological role, involved in polyamine biosynthesis. This is N-carbamoylputrescine amidase (CPA) from Solanum lycopersicum (Tomato).